The chain runs to 162 residues: Small ribosomal subunit protein uS13 (162 aa).

The tract at residues Arg142–Lys162 is disordered.

The protein belongs to the universal ribosomal protein uS13 family. In terms of assembly, part of the 30S ribosomal subunit. Forms a loose heterodimer with protein S19. Forms two bridges to the 50S subunit in the 70S ribosome.

Its function is as follows. Located at the top of the head of the 30S subunit, it contacts several helices of the 16S rRNA. In the 70S ribosome it contacts the 23S rRNA (bridge B1a) and protein L5 of the 50S subunit (bridge B1b), connecting the 2 subunits; these bridges are implicated in subunit movement. The protein is Small ribosomal subunit protein uS13 of Methanosarcina mazei (strain ATCC BAA-159 / DSM 3647 / Goe1 / Go1 / JCM 11833 / OCM 88) (Methanosarcina frisia).